A 211-amino-acid chain; its full sequence is Glycerol-3-phosphate acyltransferase (211 aa).

A run of 6 helical transmembrane segments spans residues 10 to 30, 63 to 83, 90 to 110, 126 to 146, 152 to 172, and 174 to 194; these read FYTWSIFLMSYLIGSIPFGLL, TLTLLCDILKGTVVVLVIKFL, SIIISLVGFFAFLGHLFPIWL, LGYYWPAAIVFIIVWIMFFIL, LSALIAVIITPIFVYFSYPHL, and AHCILVMMSIFVIIKHHANIA.

It belongs to the PlsY family. As to quaternary structure, probably interacts with PlsX.

It is found in the cell inner membrane. It carries out the reaction an acyl phosphate + sn-glycerol 3-phosphate = a 1-acyl-sn-glycero-3-phosphate + phosphate. The protein operates within lipid metabolism; phospholipid metabolism. Functionally, catalyzes the transfer of an acyl group from acyl-phosphate (acyl-PO(4)) to glycerol-3-phosphate (G3P) to form lysophosphatidic acid (LPA). This enzyme utilizes acyl-phosphate as fatty acyl donor, but not acyl-CoA or acyl-ACP. This Bartonella quintana (strain Toulouse) (Rochalimaea quintana) protein is Glycerol-3-phosphate acyltransferase.